The primary structure comprises 468 residues: UDP-N-acetylmuramoyl-L-alanine--L-glutamate ligase (468 aa).

122-128 contributes to the ATP binding site; sequence GTKGKST.

It belongs to the MurCDEF family. MurD2 subfamily.

It is found in the cytoplasm. The enzyme catalyses UDP-N-acetyl-alpha-D-muramoyl-L-alanine + L-glutamate + ATP = UDP-N-acetyl-alpha-D-muramoyl-L-alanyl-L-glutamate + ADP + phosphate + H(+). It participates in cell wall biogenesis; peptidoglycan biosynthesis. Cell wall formation. Catalyzes the addition of L-glutamate to the nucleotide precursor UDP-N-acetylmuramoyl-L-alanine. The polypeptide is UDP-N-acetylmuramoyl-L-alanine--L-glutamate ligase (Xanthomonas campestris pv. campestris (strain 8004)).